Consider the following 385-residue polypeptide: MADSITTIVTALGFPSIESFIGVLLLGGAIIGAIVVIATIRPILDLFPFAYPNARVRARIGRLLNEKQLSEILETESMEEFKNYLRGLPDYAKYIDRFPIEKALESQLAETYEMVSQIAPASIRDPFRANLKRWDVRNIKSLITAKAAGLSAEETVNLLVPGGEVYEIIEGLADASSVQEVVTGLEATEYAGVLEDALSGYEETGMLLPIEAALDRKFLEGLIRTVGSPSDDNTKILHTYFGTMVDISNLKIILRAKADGLSYDDISPYIVPHGYQIREWKLKDLMESEDVSGVVSGLEGTDYGQMLSEALSEYTSTGSVAVFERVLEDNLNRMARNFALKKPFGVGPMIGFLSRKEVEVKNLKVIARSKREPGFPEAMVKEMLA.

It belongs to the V-ATPase V0D/AC39 subunit family. In terms of assembly, has multiple subunits with at least A(3), B(3), C, D, E, F, H, I and proteolipid K(x).

The protein localises to the cell membrane. In terms of biological role, component of the A-type ATP synthase that produces ATP from ADP in the presence of a proton gradient across the membrane. This is A-type ATP synthase subunit C from Methanothermobacter thermautotrophicus (strain ATCC 29096 / DSM 1053 / JCM 10044 / NBRC 100330 / Delta H) (Methanobacterium thermoautotrophicum).